The sequence spans 1021 residues: tRNA wybutosine-synthesizing protein 4 (1021 aa).

S-adenosyl-L-methionine contacts are provided by residues Arg68, Asp122, 171 to 172, and Glu198; that span reads DL. Positions 826-980 constitute a JmjC domain; it reads PTEAPANLAE…STGRDVYGNR (155 aa).

It belongs to the methyltransferase superfamily. LCMT family.

It carries out the reaction 7-[(3S)-3-amino-3-carboxypropyl]wyosine(37) in tRNA(Phe) + S-adenosyl-L-methionine = 7-[(3S)-(3-amino-3-methoxycarbonyl)propyl]wyosine(37) in tRNA(Phe) + S-adenosyl-L-homocysteine. It catalyses the reaction 7-[(3S)-(3-amino-3-methoxycarbonyl)propyl]wyosine(37) in tRNA(Phe) + S-adenosyl-L-methionine + CO2 = wybutosine(37) in tRNA(Phe) + S-adenosyl-L-homocysteine + 2 H(+). It functions in the pathway tRNA modification; wybutosine-tRNA(Phe) biosynthesis. Its function is as follows. Probable S-adenosyl-L-methionine-dependent methyltransferase that acts as a component of the wybutosine biosynthesis pathway. Wybutosine is a hyper modified guanosine with a tricyclic base found at the 3'-position adjacent to the anticodon of eukaryotic phenylalanine tRNA. May methylate the carboxyl group of leucine residues to form alpha-leucine ester residues. The chain is tRNA wybutosine-synthesizing protein 4 (PPM2) from Gibberella zeae (strain ATCC MYA-4620 / CBS 123657 / FGSC 9075 / NRRL 31084 / PH-1) (Wheat head blight fungus).